Consider the following 295-residue polypeptide: Nucleotide-binding protein LSEI_0959 (295 aa).

12 to 19 is a binding site for ATP; it reads GMSGAGKT. Residue 62-65 participates in GTP binding; the sequence is DLRS.

This sequence belongs to the RapZ-like family.

Its function is as follows. Displays ATPase and GTPase activities. The chain is Nucleotide-binding protein LSEI_0959 from Lacticaseibacillus paracasei (strain ATCC 334 / BCRC 17002 / CCUG 31169 / CIP 107868 / KCTC 3260 / NRRL B-441) (Lactobacillus paracasei).